A 291-amino-acid chain; its full sequence is Homoserine kinase (291 aa).

80–90 (RPSSGLGSSAA) lines the ATP pocket.

This sequence belongs to the GHMP kinase family. Homoserine kinase subfamily.

The protein resides in the cytoplasm. It carries out the reaction L-homoserine + ATP = O-phospho-L-homoserine + ADP + H(+). It participates in amino-acid biosynthesis; L-threonine biosynthesis; L-threonine from L-aspartate: step 4/5. Catalyzes the ATP-dependent phosphorylation of L-homoserine to L-homoserine phosphate. In Haloquadratum walsbyi (strain DSM 16790 / HBSQ001), this protein is Homoserine kinase.